Consider the following 724-residue polypeptide: MPSELFDLDNARAARDTFLDARRTATLLHKFLDSHRELKSYKNGRTINVDGHTLSLAAVTAAARYNANVELSQSAQVKEGVEKSRAVIAEKVEQGTSVYGVSTGFGGSADTRTDQPLKLQQALLQHQHAGVLPSSSKTLGVLPLMDPMAATSMPEAWVRGAMLIRMNSLIRGHSGVRWELIEKINDLLRANITPVVPLRSSISASGDLSPLSYVAGTLTANPSIRVFDGPSAFGARKMVSSRDALAAHKIKPVTLASKEGLGILNGTAFSAAVASLALTEATHLALLAQVCTALGTEALCGTTGSYAPFIHVTARPHPGQIEAANNMWNLLQGSKLASGHEEEVSINQDKYELRQDRYPLRTSPQFLGPQIEDILAALASVTQECNSTTDNPLVDGNTGEVHHGGNFQAMAISNAMEKTRLAVHHIGKLMFSQSTELVNPAMNHGLPPSLAASDPSLNYHGKGVDIATAAYVSELGYLANPVTTHIQSAEMHNQAVNSLALISARATVTSLDVLTILMSSYLYLLCQAVDLRALRRDLDVGVRAIIAEEVSKLFSNNLSSEEMDLLHSSLYSKYQHTMDKTTTMDAVDQMKEVTASFAPMLVEVFTSTRVMPDALSAIPRFRSNISSRATQLFDRLRASYLSGERGATPASSLLGRTRSVYEFIRVSLGIRMHGSENYSAFANGLGVDDPTIGQNISSIYEAIRDGKFHDVVADLFEALPRSKL.

Y99 functions as the Proton donor/acceptor in the catalytic mechanism. Residues 204–206 (ASG) constitute a cross-link (5-imidazolinone (Ala-Gly)). Position 205 is a 2,3-didehydroalanine (Ser) (S205). The (E)-cinnamate site is built by N265, Q355, R361, N391, K462, E490, and N493.

The protein belongs to the PAL/histidase family. As to quaternary structure, homotetramer. In terms of processing, contains an active site 4-methylidene-imidazol-5-one (MIO), which is formed autocatalytically by cyclization and dehydration of residues Ala-Ser-Gly.

The protein resides in the cytoplasm. It carries out the reaction L-phenylalanine = (E)-cinnamate + NH4(+). Its pathway is phenylpropanoid metabolism; trans-cinnamate biosynthesis; trans-cinnamate from L-phenylalanine: step 1/1. In terms of biological role, catalyzes the non-oxidative deamination of L-phenylalanine to form trans-cinnamic acid and a free ammonium ion. Facilitates the commitment step in phenylpropanoid pathways that produce secondary metabolites such as lignins, coumarins and flavonoids. This chain is Phenylalanine ammonia-lyase, found in Flammulina velutipes (Agaricus velutipes).